We begin with the raw amino-acid sequence, 82 residues long: Envelope small membrane protein (82 aa).

The Virion surface segment spans residues 1 to 16 (MVDVFFTDTAWYVGQI). Residues 17-37 (FFLVLSCVIFLIFVVALLATI) form a helical membrane-spanning segment. The Intravirion segment spans residues 38-78 (KLCIQICGFCNIFIISPSAYVYNRGRQLYKSYSEHVIPSTL).

This sequence belongs to the betacoronaviruses E protein family. In terms of assembly, homopentamer. Interacts with membrane protein M in the budding compartment of the host cell, which is located between endoplasmic reticulum and the Golgi complex. Interacts with Nucleoprotein.

Its subcellular location is the host Golgi apparatus membrane. Plays a central role in virus morphogenesis and assembly. Acts as a viroporin and self-assembles in host membranes forming pentameric protein-lipid pores that allow ion transport. Also plays a role in the induction of apoptosis. This is Envelope small membrane protein from Homo sapiens (Human).